The sequence spans 249 residues: 5'-nucleotidase SurE (249 aa).

A divalent metal cation is bound by residues aspartate 8, aspartate 9, serine 39, and asparagine 91.

It belongs to the SurE nucleotidase family. Requires a divalent metal cation as cofactor.

It localises to the cytoplasm. It carries out the reaction a ribonucleoside 5'-phosphate + H2O = a ribonucleoside + phosphate. Functionally, nucleotidase that shows phosphatase activity on nucleoside 5'-monophosphates. This is 5'-nucleotidase SurE from Vesicomyosocius okutanii subsp. Calyptogena okutanii (strain HA).